We begin with the raw amino-acid sequence, 774 residues long: Formin-like protein 13 (774 aa).

The N-terminal stretch at M1–A22 is a signal peptide. The segment covering P51–A67 has biased composition (pro residues). A disordered region spans residues P51–R78. Positions A68–R78 are enriched in low complexity. The helical transmembrane segment at I89–L109 threads the bilayer. Disordered regions lie at residues A130 to Y163, H176 to P338, F374 to L402, and G740 to S774. Residues D194 to P216 are compositionally biased toward pro residues. Residues S242–P261 show a composition bias toward low complexity. The span at M262–R286 shows a compositional bias: pro residues. The 424-residue stretch at G326–A749 folds into the FH2 domain.

The protein belongs to the formin-like family. Class-I subfamily.

Its subcellular location is the membrane. This is Formin-like protein 13 (FH13) from Oryza sativa subsp. japonica (Rice).